A 48-amino-acid chain; its full sequence is uncharacterized protein (48 aa).

The protein localises to the plastid. It localises to the cyanelle. This is an uncharacterized protein from Cyanophora paradoxa.